The sequence spans 307 residues: Phosphoribosylaminoimidazole-succinocarboxamide synthase (307 aa).

This sequence belongs to the SAICAR synthetase family.

The enzyme catalyses 5-amino-1-(5-phospho-D-ribosyl)imidazole-4-carboxylate + L-aspartate + ATP = (2S)-2-[5-amino-1-(5-phospho-beta-D-ribosyl)imidazole-4-carboxamido]succinate + ADP + phosphate + 2 H(+). Its pathway is purine metabolism; IMP biosynthesis via de novo pathway; 5-amino-1-(5-phospho-D-ribosyl)imidazole-4-carboxamide from 5-amino-1-(5-phospho-D-ribosyl)imidazole-4-carboxylate: step 1/2. The chain is Phosphoribosylaminoimidazole-succinocarboxamide synthase from Thermobifida fusca (strain YX).